The primary structure comprises 700 residues: Elongation factor G (700 aa).

The 277-residue stretch at 10-286 (NKVRNIGIMA…AVIDYLPNPL (277 aa)) folds into the tr-type G domain. Residues 19–26 (AHIDAGKT), 83–87 (DTPGH), and 137–140 (NKMD) contribute to the GTP site.

This sequence belongs to the TRAFAC class translation factor GTPase superfamily. Classic translation factor GTPase family. EF-G/EF-2 subfamily.

The protein resides in the cytoplasm. Its function is as follows. Catalyzes the GTP-dependent ribosomal translocation step during translation elongation. During this step, the ribosome changes from the pre-translocational (PRE) to the post-translocational (POST) state as the newly formed A-site-bound peptidyl-tRNA and P-site-bound deacylated tRNA move to the P and E sites, respectively. Catalyzes the coordinated movement of the two tRNA molecules, the mRNA and conformational changes in the ribosome. This Rhodococcus erythropolis (strain PR4 / NBRC 100887) protein is Elongation factor G.